Here is a 374-residue protein sequence, read N- to C-terminus: MKIRLHTLLAVLTAAPLLLAAAGCGSKPPSGSPETGAGAGTVATTPASSPVTLAETGSTLLYPLFNLWGPAFHERYPNVTITAQGTGSGAGIAQAAAGTVNIGASDAYLSEGDMAAHKGLMNIALAISAQQVNYNLPGVSEHLKLNGKVLAAMYQGTIKTWDDPQIAALNPGVNLPGTAVVPLHRSDGSGDTFLFTQYLSKQDPEGWGKSPGFGTTVDFPAVPGALGENGNGGMVTGCAETPGCVAYIGISFLDQASQRGLGEAQLGNSSGNFLLPDAQSIQAAAAGFASKTPANQAISMIDGPAPDGYPIINYEYAIVNNRQKDAATAQTLQAFLHWAITDGNKASFLDQVHFQPLPPAVVKLSDALIATISS.

The first 23 residues, 1–23, serve as a signal peptide directing secretion; sequence MKIRLHTLLAVLTAAPLLLAAAG. Cys-24 is lipidated: N-palmitoyl cysteine. Cys-24 is lipidated: S-diacylglycerol cysteine. The interval 25–48 is disordered; that stretch reads GSKPPSGSPETGAGAGTVATTPAS. Residues 58–60, Ser-88, Asp-106, and 189–191 contribute to the phosphate site; these read STL and SGD.

It belongs to the PstS family. In terms of assembly, the complex is composed of two ATP-binding proteins (PstB), two transmembrane proteins (PstC and PstA) and a solute-binding protein (PstS).

It is found in the cell membrane. Functionally, part of the ABC transporter complex PstSACB involved in phosphate import. This is Phosphate-binding protein PstS 1 (pstS1) from Mycobacterium tuberculosis (strain CDC 1551 / Oshkosh).